The primary structure comprises 567 residues: Lactase-like protein (567 aa).

The first 21 residues, 1–21 (MKPVWVATLLWMLLLVPRLGA), serve as a signal peptide directing secretion. The Extracellular segment spans residues 23-541 (RKGSPEEASF…LLSHMQMVTE (519 aa)). Asparagine 80, asparagine 171, and asparagine 245 each carry an N-linked (GlcNAc...) asparagine glycan. The helical transmembrane segment at 542–562 (IVVPTVCSLCVLITAVLLMLL) threads the bilayer. Over 563–567 (LRRQS) the chain is Cytoplasmic.

The protein belongs to the glycosyl hydrolase 1 family. Klotho subfamily. As to quaternary structure, may form dimers.

The protein localises to the endoplasmic reticulum membrane. Plays a role in formation of the lens suture in the eye, which is important for normal optical properties of the lens. In Homo sapiens (Human), this protein is Lactase-like protein (LCTL).